We begin with the raw amino-acid sequence, 369 residues long: Anhydro-N-acetylmuramic acid kinase (369 aa).

ATP is bound at residue 12–19 (GTSLDGVD).

It belongs to the anhydro-N-acetylmuramic acid kinase family.

The enzyme catalyses 1,6-anhydro-N-acetyl-beta-muramate + ATP + H2O = N-acetyl-D-muramate 6-phosphate + ADP + H(+). It functions in the pathway amino-sugar metabolism; 1,6-anhydro-N-acetylmuramate degradation. Its pathway is cell wall biogenesis; peptidoglycan recycling. Catalyzes the specific phosphorylation of 1,6-anhydro-N-acetylmuramic acid (anhMurNAc) with the simultaneous cleavage of the 1,6-anhydro ring, generating MurNAc-6-P. Is required for the utilization of anhMurNAc either imported from the medium or derived from its own cell wall murein, and thus plays a role in cell wall recycling. The polypeptide is Anhydro-N-acetylmuramic acid kinase (Escherichia coli O1:K1 / APEC).